The chain runs to 175 residues: Peptide methionine sulfoxide reductase MsrA (175 aa).

The active site involves Cys-10.

The protein belongs to the MsrA Met sulfoxide reductase family.

It catalyses the reaction L-methionyl-[protein] + [thioredoxin]-disulfide + H2O = L-methionyl-(S)-S-oxide-[protein] + [thioredoxin]-dithiol. It carries out the reaction [thioredoxin]-disulfide + L-methionine + H2O = L-methionine (S)-S-oxide + [thioredoxin]-dithiol. In terms of biological role, has an important function as a repair enzyme for proteins that have been inactivated by oxidation. Catalyzes the reversible oxidation-reduction of methionine sulfoxide in proteins to methionine. The chain is Peptide methionine sulfoxide reductase MsrA from Psychrobacter sp. (strain PRwf-1).